The primary structure comprises 672 residues: uncharacterized protein (672 aa).

An N-terminal signal peptide occupies residues 1–24; sequence MKTLKTLKIFIIICIASVSLASFA. Transmembrane regions (helical) follow at residues 226 to 246, 254 to 274, 410 to 430, 436 to 456, 469 to 489, and 562 to 582; these read IIGAALILYTMFFAFNMALNK, IALFVIKFLLVAYFSIGLGPL, IILAAGLVFSVIFLSILLYFI, CMITIYVMTYISPIFIPMALF, VCISCALQPAVVAGFIALLIT, and VVSILAELLCVLVFSVIFYYF. The interval 626–672 is disordered; it reads ASQGKPSVGDKPDVGGKRKEGEQQGGDSESGAGGGLADLASGSGGGK. Residues 633–647 are compositionally biased toward basic and acidic residues; it reads VGDKPDVGGKRKEGE. The span at 656–672 shows a compositional bias: gly residues; the sequence is GAGGGLADLASGSGGGK.

It belongs to the TrbL/VirB6 family.

The protein localises to the cell membrane. This is an uncharacterized protein from Rickettsia felis (strain ATCC VR-1525 / URRWXCal2) (Rickettsia azadi).